Reading from the N-terminus, the 434-residue chain is Nicotinate phosphoribosyltransferase (434 aa).

The residue at position 242 (H242) is a Phosphohistidine; by autocatalysis.

It belongs to the NAPRTase family. Transiently phosphorylated on a His residue during the reaction cycle. Phosphorylation strongly increases the affinity for substrates and increases the rate of nicotinate D-ribonucleotide production. Dephosphorylation regenerates the low-affinity form of the enzyme, leading to product release.

The catalysed reaction is nicotinate + 5-phospho-alpha-D-ribose 1-diphosphate + ATP + H2O = nicotinate beta-D-ribonucleotide + ADP + phosphate + diphosphate. It participates in cofactor biosynthesis; NAD(+) biosynthesis; nicotinate D-ribonucleotide from nicotinate: step 1/1. In terms of biological role, catalyzes the synthesis of beta-nicotinate D-ribonucleotide from nicotinate and 5-phospho-D-ribose 1-phosphate at the expense of ATP. The protein is Nicotinate phosphoribosyltransferase of Mesorhizobium japonicum (strain LMG 29417 / CECT 9101 / MAFF 303099) (Mesorhizobium loti (strain MAFF 303099)).